A 909-amino-acid chain; its full sequence is Ribosome-releasing factor 2, mitochondrial (909 aa).

Residues 1-15 (MVAAPLLRAHQAARL) constitute a mitochondrion transit peptide. The region spanning 57–367 (DRTRNIGIIA…AVTNLLPSPP (311 aa)) is the tr-type G domain. 66–73 (AHIDAGKT) contacts GTP. A disordered region spans residues 121–148 (WPPQTAGDGNTTPQEPQTPRSASSHTVN). Positions 127–148 (GDGNTTPQEPQTPRSASSHTVN) are enriched in polar residues. GTP contacts are provided by residues 151 to 155 (DTPGH) and 205 to 208 (NKLD).

The protein belongs to the TRAFAC class translation factor GTPase superfamily. Classic translation factor GTPase family. EF-G/EF-2 subfamily.

It localises to the mitochondrion. In terms of biological role, mitochondrial GTPase that mediates the disassembly of ribosomes from messenger RNA at the termination of mitochondrial protein biosynthesis. Not involved in the GTP-dependent ribosomal translocation step during translation elongation. The polypeptide is Ribosome-releasing factor 2, mitochondrial (mef2) (Aspergillus flavus (strain ATCC 200026 / FGSC A1120 / IAM 13836 / NRRL 3357 / JCM 12722 / SRRC 167)).